The sequence spans 360 residues: DNA replication and repair protein RecF (360 aa).

30-37 (GRNAQGKT) provides a ligand contact to ATP.

This sequence belongs to the RecF family.

It is found in the cytoplasm. The RecF protein is involved in DNA metabolism; it is required for DNA replication and normal SOS inducibility. RecF binds preferentially to single-stranded, linear DNA. It also seems to bind ATP. The polypeptide is DNA replication and repair protein RecF (Desulforudis audaxviator (strain MP104C)).